Reading from the N-terminus, the 240-residue chain is UDP-2,3-diacylglucosamine hydrolase (240 aa).

Mn(2+) contacts are provided by aspartate 7, histidine 9, aspartate 40, asparagine 78, and histidine 113. 78–79 (NR) contributes to the substrate binding site. Residues aspartate 121, serine 159, threonine 163, lysine 166, and histidine 194 each coordinate substrate. 2 residues coordinate Mn(2+): histidine 194 and histidine 196.

The protein belongs to the LpxH family. Requires Mn(2+) as cofactor.

It is found in the cell inner membrane. It catalyses the reaction UDP-2-N,3-O-bis[(3R)-3-hydroxytetradecanoyl]-alpha-D-glucosamine + H2O = 2-N,3-O-bis[(3R)-3-hydroxytetradecanoyl]-alpha-D-glucosaminyl 1-phosphate + UMP + 2 H(+). The protein operates within glycolipid biosynthesis; lipid IV(A) biosynthesis; lipid IV(A) from (3R)-3-hydroxytetradecanoyl-[acyl-carrier-protein] and UDP-N-acetyl-alpha-D-glucosamine: step 4/6. In terms of biological role, hydrolyzes the pyrophosphate bond of UDP-2,3-diacylglucosamine to yield 2,3-diacylglucosamine 1-phosphate (lipid X) and UMP by catalyzing the attack of water at the alpha-P atom. Involved in the biosynthesis of lipid A, a phosphorylated glycolipid that anchors the lipopolysaccharide to the outer membrane of the cell. The polypeptide is UDP-2,3-diacylglucosamine hydrolase (Pseudomonas entomophila (strain L48)).